We begin with the raw amino-acid sequence, 223 residues long: uncharacterized protein (223 aa).

Residues 1 to 17 form the signal peptide; the sequence is MLGQGLIFISLAFVAHA. N-linked (GlcNAc...) asparagine glycosylation occurs at asparagine 58. A disordered region spans residues 149–188; it reads VRKKGSRPSKPQKEKQGNKQGSKTEESPNVDEDELESEPE. A compositionally biased stretch (basic and acidic residues) spans 159–174; the sequence is PQKEKQGNKQGSKTEE. A compositionally biased stretch (acidic residues) spans 176–187; it reads PNVDEDELESEP. A helical transmembrane segment spans residues 191–211; sequence TFFQKYGLYLIPILFLIIMSG.

Its subcellular location is the endoplasmic reticulum membrane. This is an uncharacterized protein from Schizosaccharomyces pombe (strain 972 / ATCC 24843) (Fission yeast).